The sequence spans 137 residues: Ribosome-binding factor A (137 aa).

It belongs to the RbfA family. In terms of assembly, monomer. Binds 30S ribosomal subunits, but not 50S ribosomal subunits or 70S ribosomes.

It localises to the cytoplasm. One of several proteins that assist in the late maturation steps of the functional core of the 30S ribosomal subunit. Associates with free 30S ribosomal subunits (but not with 30S subunits that are part of 70S ribosomes or polysomes). Required for efficient processing of 16S rRNA. May interact with the 5'-terminal helix region of 16S rRNA. The chain is Ribosome-binding factor A from Rhodopseudomonas palustris (strain TIE-1).